The following is a 606-amino-acid chain: Vitamin B12 transporter BtuB (606 aa).

The first 21 residues, 1-21 (MKKTLLAVALAPLCLPSQVFA), serve as a signal peptide directing secretion. The TonB box motif lies at 28–35 (DVMVVTAN). Positions 40–152 (PIKNVIAPIS…IGGVLNIITA (113 aa)) constitute a TBDR plug domain. The TBDR beta-barrel domain maps to 157 to 606 (ESVAEVTAGG…SYYATATYKF (450 aa)). The TonB C-terminal box signature appears at 589-606 (ETYNVQERSYYATATYKF).

This sequence belongs to the TonB-dependent receptor family. BtuB (TC 1.B.14.3.1) subfamily.

Its subcellular location is the cell outer membrane. In terms of biological role, involved in the active translocation of vitamin B12 (cyanocobalamin) across the outer membrane to the periplasmic space. It derives its energy for transport by interacting with the trans-periplasmic membrane protein TonB. The sequence is that of Vitamin B12 transporter BtuB from Photobacterium profundum (strain SS9).